Reading from the N-terminus, the 201-residue chain is Large ribosomal subunit protein uL4 (201 aa).

Residues 45–71 are disordered; that stretch reads AQKTRAEVTGSGKKPWRQKGTGRARAG.

It belongs to the universal ribosomal protein uL4 family. As to quaternary structure, part of the 50S ribosomal subunit.

Functionally, one of the primary rRNA binding proteins, this protein initially binds near the 5'-end of the 23S rRNA. It is important during the early stages of 50S assembly. It makes multiple contacts with different domains of the 23S rRNA in the assembled 50S subunit and ribosome. In terms of biological role, forms part of the polypeptide exit tunnel. This is Large ribosomal subunit protein uL4 from Shewanella oneidensis (strain ATCC 700550 / JCM 31522 / CIP 106686 / LMG 19005 / NCIMB 14063 / MR-1).